Reading from the N-terminus, the 227-residue chain is MRNGTLVLAALLTLFVLAGSSSAADVGIELDKNMSDGSPIKPTYNSTIKIKAIVKAWNLDVQNATARVQLPEGLVVQDYYMSQGYYDLETGTWEIGDIPAYEERSLTFICLLNRTGSVTVNANVTADGDDNSANNNAELTFKVFGISDLEVNVTGNKETARIGDTVRITVKLKNRGPHDANNIKIGNFLSGGLVVQNFSYDAGYFDDITREWIFETLAAGEEAKSKP.

To ORF5 in pFZ1.

This is an uncharacterized protein from Methanothermobacter thermautotrophicus (Methanobacterium thermoformicicum).